The following is a 65-amino-acid chain: Large ribosomal subunit protein bL35 (65 aa).

The interval 1–22 (MPKMKTKSSAKKRFKVTGSGKI) is disordered.

It belongs to the bacterial ribosomal protein bL35 family.

The sequence is that of Large ribosomal subunit protein bL35 from Flavobacterium psychrophilum (strain ATCC 49511 / DSM 21280 / CIP 103535 / JIP02/86).